The chain runs to 31 residues: Dermaseptin-7.2TR (31 aa).

Position 31 is a glutamic acid 1-amide (glutamate 31).

Expressed by the skin glands.

Its subcellular location is the secreted. Has antimicrobial activity. The chain is Dermaseptin-7.2TR from Phyllomedusa trinitatis (Trinidad leaf frog).